The following is a 275-amino-acid chain: Glutamate racemase (275 aa).

Substrate contacts are provided by residues 12–13 (DS) and 44–45 (YG). Cys-75 serves as the catalytic Proton donor/acceptor. A substrate-binding site is contributed by 76-77 (NT). The active-site Proton donor/acceptor is the Cys-185. Residue 186-187 (TH) participates in substrate binding.

Belongs to the aspartate/glutamate racemases family.

The catalysed reaction is L-glutamate = D-glutamate. The protein operates within cell wall biogenesis; peptidoglycan biosynthesis. Functionally, provides the (R)-glutamate required for cell wall biosynthesis. This is Glutamate racemase from Mycolicibacterium paratuberculosis (strain ATCC BAA-968 / K-10) (Mycobacterium paratuberculosis).